A 728-amino-acid polypeptide reads, in one-letter code: Prolyl 3-hydroxylase 1 (728 aa).

Residues 1 to 14 form the signal peptide; it reads MVAVAAAAASRATA. TPR repeat units follow at residues 25–58, 135–168, 197–230, and 293–326; these read PDLLYAEGTAAYARGDWPGVVLNMERALRSRAAL, RSPYNYLQVAYFKINKLEKAVAAAHTFFVGNPEH, HMHEFRLGVRLYSEEKPLEAVPHLEAALQEYFVA, and PSHYNYLQFAYYNIGNYTQAIECAKTYLLFFPND. An N-linked (GlcNAc...) asparagine glycan is attached at Asn-308. Residues 393-431 are a coiled coil; that stretch reads KRLQEKQKSERETAVRISQEIGNLMKEIETLVEEKTKES. Asn-450, Asn-459, and Asn-532 each carry an N-linked (GlcNAc...) asparagine glycan. The 115-residue stretch at 556 to 670 folds into the Fe2OG dioxygenase domain; it reads SHLVCRTAIE…RCAIALWFTL (115 aa). 3 residues coordinate Fe cation: His-579, Asp-581, and His-651. Arg-661 is a catalytic residue. The interval 691–728 is disordered; that stretch reads SPEEVDLPQEQPLPDQQGSPKPGEESLSDRESQPKDEL. The span at 698–707 shows a compositional bias: low complexity; that stretch reads PQEQPLPDQQ. The span at 712–728 shows a compositional bias: basic and acidic residues; that stretch reads PGEESLSDRESQPKDEL. Positions 725 to 728 match the Prevents secretion from ER motif; the sequence is KDEL.

It belongs to the leprecan family. Requires Fe cation as cofactor. L-ascorbate is required as a cofactor. In terms of processing, O-glycosylated; chondroitin sulfate. In terms of tissue distribution, expressed in basement membranes of cardiac muscle, skeletal muscle, central nervous system, intestinal tract, trachea, ear, skin, liver and kidney. In kidney, localizes to the glomerular basement membrane, mesangial matrix and Bowman's capsule of the nephron. In the renal parenchyma, expressed in the basement membranes of tubules and blood vessels. In the ear and trachea, localizes to the perimeter of resident chondrocytes in lacunae.

It localises to the endoplasmic reticulum. The protein resides in the secreted. The protein localises to the extracellular space. Its subcellular location is the extracellular matrix. The catalysed reaction is L-prolyl-[collagen] + 2-oxoglutarate + O2 = trans-3-hydroxy-L-prolyl-[collagen] + succinate + CO2. Its function is as follows. Basement membrane-associated chondroitin sulfate proteoglycan (CSPG). Has prolyl 3-hydroxylase activity catalyzing the post-translational formation of 3-hydroxyproline in -Xaa-Pro-Gly- sequences in collagens, especially types IV and V. May be involved in the secretory pathway of cells. Has growth suppressive activity in fibroblasts. This chain is Prolyl 3-hydroxylase 1, found in Rattus norvegicus (Rat).